The chain runs to 202 residues: Putative pituitary tumor-transforming gene 3 protein (202 aa).

Positions 61–64 match the D-box motif; that stretch reads RKAL. A disordered region spans residues 67 to 92; sequence VNRATEKSVKTNGPLKQKQPSFSAKK. Residues 163–173 carry the SH3-binding motif; sequence PPLPLKMPSPP.

The protein belongs to the securin family.

Its subcellular location is the cytoplasm. It localises to the nucleus. The protein is Putative pituitary tumor-transforming gene 3 protein (PTTG3) of Pongo pygmaeus (Bornean orangutan).